The primary structure comprises 361 residues: MEPGAAELYDQALLGILQHVGNVQDFLRVLFGFLYRKTDFYRLLRHPSDRMGFPPGAAQALVLQVFKTFDHMARQDDEKRRQELEEKIRRKEEEEAKTVSAAAAEKEPVPVPVQEIEIDSTTELGGRQEVEKVQPPGPVKEMAHGSLEAEAPGAVAGAAEVPREPPVLPRIQEQFQKNPDSYNGAVRENYTWSQDYTDLEVRVPVPKHVVKGKQVSVALSSSSIRVAMLEENGERVLMEGKLTHKINTESSLWSLEPGKCVLVNLSKVGEYWWNAILEGEEPIDIDKINKERSMATVDEEEQAVLDRLTFDYHQKLQGKPQSHELKVHEMLKKGWDAEGSPFRGQRFDPAMFNISPGAVQF.

The segment covering 87–97 (KIRRKEEEEAK) has biased composition (basic and acidic residues). Positions 87 to 106 (KIRRKEEEEAKTVSAAAAEK) are disordered. A Phosphoserine modification is found at Ser146. Residues 185-277 (AVRENYTWSQ…VGEYWWNAIL (93 aa)) enclose the CS domain. Ser340 and Ser355 each carry phosphoserine.

This chain is NudC domain-containing protein 3 (NUDCD3), found in Pongo abelii (Sumatran orangutan).